The chain runs to 380 residues: MEVNTKKRVVIGLSGGVDSSVSALLLKQQGYEVIGLFMANWDTVANFENNRESDKKHQGCESELDYQDAQAVAQKIGIPLYRVEFIKEYWNNVFEYFLSEYQKNRTPNPDILCNQFIKFDSFLNYAKNELKADYIAMGHYAKVKHTNNLSYLLKATDVNKDQTYFLCNLKQTQLQNALFPIGDLTKQQVRTIAKEYGLVTANKKDSTGICFIGERNFKYFLENYIPNQPGEIVNIVNNQIVGHHMGTMYYTIGQRKGLNLGGMNERMFVCEKDINKKIIYVSPLSLEDQYLISNQALVENMNFIEPYNPQIPISVRFRHRQNLVVVNSFLCIENTNNVLINYEPAKAITPGQYAVFYQNDHCIGGGVIAQTNANHKKINF.

ATP contacts are provided by residues 12–19 and Met38; that span reads GLSGGVDS. Positions 108 to 110 are interaction with target base in tRNA; the sequence is NPD. The active-site Nucleophile is Cys113. Cys113 and Cys210 are oxidised to a cystine. An ATP-binding site is contributed by Gly138. An interaction with tRNA region spans residues 160–162; sequence KDQ. Catalysis depends on Cys210, which acts as the Cysteine persulfide intermediate.

The protein belongs to the MnmA/TRMU family.

The protein localises to the cytoplasm. The enzyme catalyses S-sulfanyl-L-cysteinyl-[protein] + uridine(34) in tRNA + AH2 + ATP = 2-thiouridine(34) in tRNA + L-cysteinyl-[protein] + A + AMP + diphosphate + H(+). Functionally, catalyzes the 2-thiolation of uridine at the wobble position (U34) of tRNA, leading to the formation of s(2)U34. The polypeptide is tRNA-specific 2-thiouridylase MnmA (Ureaplasma urealyticum serovar 10 (strain ATCC 33699 / Western)).